We begin with the raw amino-acid sequence, 389 residues long: Probable peptide chain release factor 1, mitochondrial (389 aa).

Q259 carries the N5-methylglutamine modification.

The protein belongs to the prokaryotic/mitochondrial release factor family. In terms of processing, methylation of glutamine in the GGQ triplet is conserved from bacteria to mammals.

Its subcellular location is the mitochondrion. Mitochondrial peptide chain release factor that directs the termination of translation in response to the peptide chain termination codons UAA and UAG. In Caenorhabditis elegans, this protein is Probable peptide chain release factor 1, mitochondrial.